The primary structure comprises 348 residues: Selenide, water dikinase (348 aa).

Residue C17 is part of the active site. ATP contacts are provided by residues K20 and 48 to 50 (TRD). D51 serves as a coordination point for Mg(2+). ATP-binding positions include D68, D91, and 139 to 141 (GHS). D91 is a binding site for Mg(2+). D227 is a Mg(2+) binding site.

It belongs to the selenophosphate synthase 1 family. Class I subfamily. As to quaternary structure, homodimer. Requires Mg(2+) as cofactor.

The enzyme catalyses hydrogenselenide + ATP + H2O = selenophosphate + AMP + phosphate + 2 H(+). Synthesizes selenophosphate from selenide and ATP. In Yersinia pestis, this protein is Selenide, water dikinase.